We begin with the raw amino-acid sequence, 335 residues long: Methionine import ATP-binding protein MetN 2 (335 aa).

Residues 2–242 enclose the ABC transporter domain; the sequence is IEFHNVHKTY…PQHSTTKRFV (241 aa). Position 38–45 (38–45) interacts with ATP; sequence GHSGAGKS.

This sequence belongs to the ABC transporter superfamily. Methionine importer (TC 3.A.1.24) family. In terms of assembly, the complex is composed of two ATP-binding proteins (MetN), two transmembrane proteins (MetI) and a solute-binding protein (MetQ).

The protein localises to the cell inner membrane. The catalysed reaction is L-methionine(out) + ATP + H2O = L-methionine(in) + ADP + phosphate + H(+). The enzyme catalyses D-methionine(out) + ATP + H2O = D-methionine(in) + ADP + phosphate + H(+). Functionally, part of the ABC transporter complex MetNIQ involved in methionine import. Responsible for energy coupling to the transport system. This is Methionine import ATP-binding protein MetN 2 from Pseudomonas syringae pv. tomato (strain ATCC BAA-871 / DC3000).